A 376-amino-acid polypeptide reads, in one-letter code: Protein RecA (376 aa).

Residue 78 to 85 (GPESSGKT) coordinates ATP. The interval 355–376 (PVELVPNVDFDDEADTEADAED) is disordered. Positions 363–376 (DFDDEADTEADAED) are enriched in acidic residues.

Belongs to the RecA family.

The protein localises to the cytoplasm. Functionally, can catalyze the hydrolysis of ATP in the presence of single-stranded DNA, the ATP-dependent uptake of single-stranded DNA by duplex DNA, and the ATP-dependent hybridization of homologous single-stranded DNAs. It interacts with LexA causing its activation and leading to its autocatalytic cleavage. This chain is Protein RecA, found in Corynebacterium glutamicum (strain R).